The primary structure comprises 1995 residues: MAAVTMSVPGRKAPPRPGPVPEAAQPFLFTPRGPSAGGGPGSGTSPQVEWTARRLVWVPSELHGFEAAALRDEGEEEAEVELAESGRRLRLPRDQIQRMNPPKFSKAEDMAELTCLNEASVLHNLRERYYSGLIYTYSGLFCVVINPYKQLPIYTEAIVEMYRGKKRHEVPPHVYAVTEGAYRSMLQDREDQSILCTGESGAGKTENTKKVIQYLAHVASSPKGRKEPGVPGELERQLLQANPILEAFGNAKTVKNDNSSRFGKFIRINFDVAGYIVGANIETYLLEKSRAIRQAKDECSFHIFYQLLGGAGEQLKADLLLEPCSHYRFLTNGPSSSPGQERELFQETLESLRVLGFSHEEIISMLRMVSAVLQFGNIALKRERNTDQATMPDNTAAQKLCRLLGLGVTDFSRALLTPRIKVGRDYVQKAQTKEQADFALEALAKATYERLFRWLVLRLNRALDRSPRQGASFLGILDIAGFEIFQLNSFEQLCINYTNEKLQQLFNHTMFVLEQEEYQREGIPWTFLDFGLDLQPCIDLIERPANPPGLLALLDEECWFPKATDKSFVEKVAQEQGGHPKFQRPRHLRDQADFSVLHYAGKVDYKANEWLMKNMDPLNDNVAALLHQSTDRLTAEIWKDVEGIVGLEQVSSLGDGPPGGRPRRGMFRTVGQLYKESLSRLMATLSNTNPSFVRCIVPNHEKRAGKLEPRLVLDQLRCNGVLEGIRICRQGFPNRILFQEFRQRYEILTPNAIPKGFMDGKQACEKMIQALELDPNLYRVGQSKIFFRAGVLAQLEEERDLKVTDIIVSFQAAARGYLARRAFQKRQQQQSALRVMQRNCAAYLKLRHWQWWRLFTKVKPLLQVTRQDEVLQARAQELQKVQELQQQSAREVGELQGRVAQLEEERARLAEQLRAEAELCAEAEETRGRLAARKQELELVVSELEARVGEEEECSRQMQTEKKRLQQHIQELEAHLEAEEGARQKLQLEKVTTEAKMKKFEEDLLLLEDQNSKLSKERKLLEDRLAEFSSQAAEEEEKVKSLNKLRLKYEATIADMEDRLRKEEKGRQELEKLKRRLDGESSELQEQMVEQQQRAEELRAQLGRKEEELQAALARAEDEGGARAQLLKSLREAQAALAEAQEDLESERVARTKAEKQRRDLGEELEALRGELEDTLDSTNAQQELRSKREQEVTELKKTLEEETRIHEAAVQELRQRHGQALGELAEQLEQARRGKGAWEKTRLALEAEVSELRAELSSLQTARQEGEQRRRRLELQLQEVQGRAGDGERARAEAAEKLQRAQAELENVSGALNEAESKTIRLSKELSSTEAQLHDAQELLQEETRAKLALGSRVRAMEAEAAGLREQLEEEAAARERAGRELQTAQAQLSEWRRRQEEEAGALEAGEEARRRAAREAEALTQRLAEKTETVDRLERGRRRLQQELDDATMDLEQQRQLVSTLEKKQRKFDQLLAEEKAAVLRAVEERERAEAEGREREARALSLTRALEEEQEAREELERQNRALRAELEALLSSKDDVGKSVHELERACRVAEQAANDLRAQVTELEDELTAAEDAKLRLEVTVQALKTQHERDLQGRDEAGEERRRQLAKQLRDAEVERDEERKQRTLAVAARKKLEGELEELKAQMASAGQGKEEAVKQLRKMQAQMKELWREVEETRTSREEIFSQNRESEKRLKGLEAEVLRLQEELAASDRARRQAQQDRDEMADEVANGNLSKAAILEEKRQLEGRLGQLEEELEEEQSNSELLNDRYRKLLLQVESLTTELSAERSFSAKAESGRQQLERQIQELRGRLGEEDAGARARHKMTIAALESKLAQAEEQLEQETRERILSGKLVRRAEKRLKEVVLQVEEERRVADQLRDQLEKGNLRVKQLKRQLEEAEEEASRAQAGRRRLQRELEDVTESAESMNREVTTLRNRLRRGPLTFTTRTVRQVFRLEEGVASDEEAEEAQPGSGPSPEPEGSPPAHPQ.

The interval M1–P46 is disordered. A2 carries the N-acetylalanine modification. A Myosin N-terminal SH3-like domain is found at T51–P101. S60 is modified (phosphoserine). In terms of domain architecture, Myosin motor spans S105 to D800. G198 to T205 contributes to the ATP binding site. Residues L678–H700 are actin-binding. In terms of domain architecture, IQ spans V803 to A832. The stretch at L862–R1947 forms a coiled coil. Position 1194 is a phosphothreonine (T1194). 4 disordered regions span residues E1371 to A1415, Q1592 to D1623, E1905 to R1942, and R1958 to Q1995. A compositionally biased stretch (polar residues) spans S1930–R1942. Phosphoserine occurs at positions 1969, 1980, 1983, and 1989. Pro residues predominate over residues G1981 to Q1995.

Belongs to the TRAFAC class myosin-kinesin ATPase superfamily. Myosin family. In terms of assembly, myosin is a hexameric protein that consists of 2 heavy chain subunits (MHC), 2 alkali light chain subunits (MLC) and 2 regulatory light chain subunits (MLC-2). High levels of expression are found in brain (highest in corpus callosum), heart, kidney, liver, lung, small intestine, colon and skeletal muscle. Expression is low in organs composed mainly of smooth muscle, such as aorta, uterus and urinary bladder. No detectable expression is found in thymus, spleen, placenta and lymphocytes.

Functionally, cellular myosin that appears to play a role in cytokinesis, cell shape, and specialized functions such as secretion and capping. This chain is Myosin-14 (MYH14), found in Homo sapiens (Human).